We begin with the raw amino-acid sequence, 738 residues long: 1,4-alpha-glucan branching enzyme GlgB (738 aa).

The Nucleophile role is filled by aspartate 417. Glutamate 472 (proton donor) is an active-site residue.

Belongs to the glycosyl hydrolase 13 family. GlgB subfamily. In terms of assembly, monomer.

It carries out the reaction Transfers a segment of a (1-&gt;4)-alpha-D-glucan chain to a primary hydroxy group in a similar glucan chain.. It functions in the pathway glycan biosynthesis; glycogen biosynthesis. Functionally, catalyzes the formation of the alpha-1,6-glucosidic linkages in glycogen by scission of a 1,4-alpha-linked oligosaccharide from growing alpha-1,4-glucan chains and the subsequent attachment of the oligosaccharide to the alpha-1,6 position. The protein is 1,4-alpha-glucan branching enzyme GlgB of Burkholderia pseudomallei (strain 1106a).